The following is a 425-amino-acid chain: Enolase (425 aa).

Glutamine 163 serves as a coordination point for (2R)-2-phosphoglycerate. The active-site Proton donor is the glutamate 205. Residues aspartate 242, glutamate 286, and aspartate 313 each coordinate Mg(2+). Residues lysine 338, arginine 367, serine 368, and lysine 389 each contribute to the (2R)-2-phosphoglycerate site. Lysine 338 acts as the Proton acceptor in catalysis.

It belongs to the enolase family. It depends on Mg(2+) as a cofactor.

The protein localises to the cytoplasm. It is found in the secreted. It localises to the cell surface. It carries out the reaction (2R)-2-phosphoglycerate = phosphoenolpyruvate + H2O. Its pathway is carbohydrate degradation; glycolysis; pyruvate from D-glyceraldehyde 3-phosphate: step 4/5. Catalyzes the reversible conversion of 2-phosphoglycerate (2-PG) into phosphoenolpyruvate (PEP). It is essential for the degradation of carbohydrates via glycolysis. The protein is Enolase of Lactobacillus delbrueckii subsp. bulgaricus (strain ATCC 11842 / DSM 20081 / BCRC 10696 / JCM 1002 / NBRC 13953 / NCIMB 11778 / NCTC 12712 / WDCM 00102 / Lb 14).